The following is a 481-amino-acid chain: Protein hedgehog (481 aa).

Cysteine 93 carries the N-palmitoyl cysteine lipid modification. The Ca(2+) site is built by glutamate 157, glutamate 158, aspartate 163, threonine 193, glutamate 194, aspartate 197, and aspartate 199. A lipid anchor (Cholesterol glycine ester) is attached at glycine 265.

It belongs to the hedgehog family. As to quaternary structure, interacts with shf. In terms of processing, the C-terminal part of the hedgehog protein precursor displays an autoproteolysis activity that results in the cleavage of the full-length protein into two parts (N-product and C-product). In addition, the C-terminal part displays a cholesterol transferase activity that results by the covalent attachment of a cholesterol moiety to the C-terminal of the newly generated N-product. The N-product is the active species in both local and long-range signaling, whereas the C-product has no signaling activity. Post-translationally, cholesterylation is required for N-product targeting to lipid rafts and multimerization. N-palmitoylation by Rasp of the hedgehog N-product, within the secretory pathway, is required for the embryonic and larval patterning activities of the hedgehog signal.

The protein resides in the nucleus. Its subcellular location is the cytoplasm. It localises to the cell membrane. The catalysed reaction is glycyl-L-cysteinyl-[protein] + cholesterol + H(+) = [protein]-C-terminal glycyl cholesterol ester + N-terminal L-cysteinyl-[protein]. Its function is as follows. The C-terminal part of the hedgehog protein precursor displays an autoproteolysis activity that results in the cleavage of the full-length protein into two parts (N-product and C-product). In addition, the C-terminal part displays a cholesterol transferase activity that results by the covalent attachment of a cholesterol moiety to the C-terminal of the newly generated N-product. Once cleaved, the C-product has no signaling activity and diffuses from the cell. Functionally, the dually lipidated hedgehog protein N-product is a morphogen which is essential for a variety of patterning events during development. Establishes the anterior-posterior axis of the embryonic segments and patterns the larval imaginal disks. Binds to the patched (ptc) receptor, which functions in association with smoothened (smo), to activate the transcription of target genes wingless (wg), decapentaplegic (dpp) and ptc. In the absence of hh, ptc represses the constitutive signaling activity of smo through fused (fu). Essential component of a signaling pathway which regulates the Duox-dependent gut immune response to bacterial uracil; required to activate Cad99C-dependent endosome formation, norpA-dependent Ca2+ mobilization and p38 MAPK, which are essential steps in the Duox-dependent production of reactive oxygen species (ROS) in response to intestinal bacterial infection. During photoreceptor differentiation, it up-regulates transcription of Ubr3, which in turn promotes the hh-signaling pathway by mediating the ubiquitination and degradation of cos. This chain is Protein hedgehog, found in Drosophila persimilis (Fruit fly).